Here is a 468-residue protein sequence, read N- to C-terminus: ATP synthase subunit beta (468 aa).

Position 155–162 (155–162) interacts with ATP; that stretch reads GGAGVGKT.

It belongs to the ATPase alpha/beta chains family. In terms of assembly, F-type ATPases have 2 components, CF(1) - the catalytic core - and CF(0) - the membrane proton channel. CF(1) has five subunits: alpha(3), beta(3), gamma(1), delta(1), epsilon(1). CF(0) has three main subunits: a(1), b(2) and c(9-12). The alpha and beta chains form an alternating ring which encloses part of the gamma chain. CF(1) is attached to CF(0) by a central stalk formed by the gamma and epsilon chains, while a peripheral stalk is formed by the delta and b chains.

The protein resides in the cell membrane. It catalyses the reaction ATP + H2O + 4 H(+)(in) = ADP + phosphate + 5 H(+)(out). In terms of biological role, produces ATP from ADP in the presence of a proton gradient across the membrane. The catalytic sites are hosted primarily by the beta subunits. The sequence is that of ATP synthase subunit beta from Streptococcus pyogenes serotype M5 (strain Manfredo).